Reading from the N-terminus, the 117-residue chain is Putative cysteine proteinase inhibitor 7 (117 aa).

The first 24 residues, methionine 1–alanine 24, serve as a signal peptide directing secretion. Residues glycine 28 to alanine 84 enclose the Cystatin domain. A Secondary area of contact motif is present at residues glutamine 71 to glycine 75.

It belongs to the cystatin family. Phytocystatin subfamily.

The protein localises to the secreted. In terms of biological role, specific inhibitor of cysteine proteinases. Probably involved in the regulation of endogenous processes and in defense against pests and pathogens. The protein is Putative cysteine proteinase inhibitor 7 of Oryza sativa subsp. japonica (Rice).